Consider the following 174-residue polypeptide: ATP-dependent protease subunit HslV (174 aa).

Thr2 is a catalytic residue. Na(+) is bound by residues Gly157, Cys160, and Thr163.

The protein belongs to the peptidase T1B family. HslV subfamily. In terms of assembly, a double ring-shaped homohexamer of HslV is capped on each side by a ring-shaped HslU homohexamer. The assembly of the HslU/HslV complex is dependent on binding of ATP.

It localises to the cytoplasm. It catalyses the reaction ATP-dependent cleavage of peptide bonds with broad specificity.. Its activity is regulated as follows. Allosterically activated by HslU binding. In terms of biological role, protease subunit of a proteasome-like degradation complex believed to be a general protein degrading machinery. The polypeptide is ATP-dependent protease subunit HslV (Shewanella putrefaciens (strain CN-32 / ATCC BAA-453)).